A 373-amino-acid polypeptide reads, in one-letter code: Capsular polysaccharide phosphotransferase (373 aa).

It belongs to the stealth family.

Functionally, part of a capsule gene locus. Expression was not detected under standard growth conditions. The protein is Capsular polysaccharide phosphotransferase of Neisseria meningitidis serogroup B.